The chain runs to 115 residues: Large ribosomal subunit protein bL19 (115 aa).

The protein belongs to the bacterial ribosomal protein bL19 family.

In terms of biological role, this protein is located at the 30S-50S ribosomal subunit interface and may play a role in the structure and function of the aminoacyl-tRNA binding site. The protein is Large ribosomal subunit protein bL19 of Thermosipho melanesiensis (strain DSM 12029 / CIP 104789 / BI429).